The primary structure comprises 312 residues: uncharacterized protein (312 aa).

Helical transmembrane passes span 4–24, 45–65, 75–95, 117–137, 171–191, 217–237, 253–275, and 280–299; these read IFLA…KVIF, LITP…PLVL, IAGI…AVML, VILA…NLIW, GLGV…IQFL, TSMT…GVMI, AFIF…PLGI, and LLLI…AHTW.

The protein localises to the cell membrane. This is an uncharacterized protein from Bacillus subtilis (strain 168).